We begin with the raw amino-acid sequence, 319 residues long: Acetyl-coenzyme A carboxylase carboxyl transferase subunit alpha (319 aa).

In terms of domain architecture, CoA carboxyltransferase C-terminal spans N35 to E296.

This sequence belongs to the AccA family. In terms of assembly, acetyl-CoA carboxylase is a heterohexamer composed of biotin carboxyl carrier protein (AccB), biotin carboxylase (AccC) and two subunits each of ACCase subunit alpha (AccA) and ACCase subunit beta (AccD).

The protein localises to the cytoplasm. The enzyme catalyses N(6)-carboxybiotinyl-L-lysyl-[protein] + acetyl-CoA = N(6)-biotinyl-L-lysyl-[protein] + malonyl-CoA. It functions in the pathway lipid metabolism; malonyl-CoA biosynthesis; malonyl-CoA from acetyl-CoA: step 1/1. Its function is as follows. Component of the acetyl coenzyme A carboxylase (ACC) complex. First, biotin carboxylase catalyzes the carboxylation of biotin on its carrier protein (BCCP) and then the CO(2) group is transferred by the carboxyltransferase to acetyl-CoA to form malonyl-CoA. The protein is Acetyl-coenzyme A carboxylase carboxyl transferase subunit alpha of Sodalis glossinidius (strain morsitans).